A 291-amino-acid polypeptide reads, in one-letter code: 2-C-methyl-D-erythritol 4-phosphate cytidylyltransferase (291 aa).

A disordered region spans residues 1–23 (MTERDFDTPVETPTVQPAPAQGA).

This sequence belongs to the IspD/TarI cytidylyltransferase family. IspD subfamily.

The enzyme catalyses 2-C-methyl-D-erythritol 4-phosphate + CTP + H(+) = 4-CDP-2-C-methyl-D-erythritol + diphosphate. It functions in the pathway isoprenoid biosynthesis; isopentenyl diphosphate biosynthesis via DXP pathway; isopentenyl diphosphate from 1-deoxy-D-xylulose 5-phosphate: step 2/6. Functionally, catalyzes the formation of 4-diphosphocytidyl-2-C-methyl-D-erythritol from CTP and 2-C-methyl-D-erythritol 4-phosphate (MEP). The protein is 2-C-methyl-D-erythritol 4-phosphate cytidylyltransferase of Bifidobacterium longum (strain NCC 2705).